Here is a 1488-residue protein sequence, read N- to C-terminus: Phenolphthiocerol/phthiocerol polyketide synthase subunit E (1488 aa).

Positions 5 to 438 (ENAIAVVGMA…GTNAHVVLEE (434 aa)) constitute a Ketosynthase family 3 (KS3) domain. Active-site for beta-ketoacyl synthase activity residues include C184, H320, and H361. Residues 551-868 (VFLFPGQGAQ…GELWSAGVEV (318 aa)) form an acyltransferase region. Catalysis depends on S641, which acts as the For malonyltransferase activity. The 75-residue stretch at 930–1004 (NGESQTEVTL…SLTAAVDASF (75 aa)) folds into the Carrier domain. An O-(pantetheine 4'-phosphoryl)serine modification is found at S965. 1286–1331 (EGVVAVELEGEGRSVLRPDVDLRRTVGWFTTYYPVPLACATGLGAL) contacts NADP(+).

NADP(+) serves as cofactor. The cofactor is pantetheine 4'-phosphate.

It catalyses the reaction icosanoyl-[(phenol)carboxyphthiodiolenone synthase] + 2 (S)-methylmalonyl-CoA + 3 malonyl-CoA + 5 NADPH + 10 H(+) = C32-carboxyphthiodiolenone-[(phenol)carboxyphthiodiolenone synthase] + 5 CO2 + 5 NADP(+) + 5 CoA + 2 H2O. It carries out the reaction docosanoyl-[(phenol)carboxyphthiodiolenone synthase] + 2 (S)-methylmalonyl-CoA + 3 malonyl-CoA + 5 NADPH + 10 H(+) = C34-carboxyphthiodiolenone-[(phenol)carboxyphthiodiolenone synthase] + 5 CO2 + 5 NADP(+) + 5 CoA + 2 H2O. The catalysed reaction is 17-(4-hydroxyphenyl)heptadecanoyl-[(phenol)carboxyphthiodiolenone synthase] + 2 (S)-methylmalonyl-CoA + 3 malonyl-CoA + 5 NADPH + 10 H(+) = C35-(phenol)carboxyphthiodiolenone-[(phenol)carboxyphthiodiolenone synthase] + 5 CO2 + 5 NADP(+) + 5 CoA + 2 H2O. The enzyme catalyses 19-(4-hydroxyphenyl)nonadecanoyl-[(phenol)carboxyphthiodiolenone synthase] + 2 (S)-methylmalonyl-CoA + 3 malonyl-CoA + 5 NADPH + 10 H(+) = C37-(phenol)carboxyphthiodiolenone-[(phenol)carboxyphthiodiolenone synthase] + 5 CO2 + 5 NADP(+) + 5 CoA + 2 H2O. The protein operates within lipid metabolism; fatty acid biosynthesis. In terms of biological role, part of the PpsABCDE complex involved in the biosynthesis of the lipid core common to phthiocerols and phenolphthiocerols by successive additions of malonyl-CoA or methylmalonyl-CoA extender units. PpsA can accept as substrate the activated forms of either icosanoyl (C20), docosanoyl (C22) or lignoceroyl (C24) groups from FadD26, or a (4-hydroxyphenyl)-C17 or (4-hydroxyphenyl)-C19 fatty acyl from FadD29. PpsA initiates the biosynthesis and extends its substrate using a malonyl-CoA extender unit. The PpsB and PpsC proteins add the second and third malonyl-CoA extender units. PpsD adds an (R)-methylmalonyl unit and PpsE adds a second (R)-methylmalonyl unit. The incorporation of the methylmalonyl units results in formation of two branched methyl groups in the elongated product. The protein is Phenolphthiocerol/phthiocerol polyketide synthase subunit E (ppsE) of Mycobacterium tuberculosis (strain CDC 1551 / Oshkosh).